The following is a 160-amino-acid chain: Transcription elongation factor GreA (160 aa).

Residues 1–72 are a coiled coil; sequence MAEKTYPMTL…QISSLETKIR (72 aa).

Belongs to the GreA/GreB family.

Functionally, necessary for efficient RNA polymerase transcription elongation past template-encoded arresting sites. The arresting sites in DNA have the property of trapping a certain fraction of elongating RNA polymerases that pass through, resulting in locked ternary complexes. Cleavage of the nascent transcript by cleavage factors such as GreA or GreB allows the resumption of elongation from the new 3'terminus. GreA releases sequences of 2 to 3 nucleotides. The chain is Transcription elongation factor GreA from Streptococcus sanguinis (strain SK36).